The chain runs to 269 residues: Gene 51 glycoprotein (269 aa).

4 N-linked (GlcNAc...) asparagine; by host glycosylation sites follow: Asn53, Asn58, Asn74, and Asn78. 2 disordered regions span residues 67–87 and 103–137; these read LSTS…TTPY and MLNS…ASKN. The span at 76 to 87 shows a compositional bias: low complexity; it reads TSNTSYSQTTPY. Residues 103 to 112 show a composition bias toward polar residues; the sequence is MLNSTPNKPL. A compositionally biased stretch (low complexity) spans 113-136; the sequence is SSTKLTPKSQSSSQSTKTTKQASK. N-linked (GlcNAc...) asparagine; by host glycans are attached at residues Asn137, Asn161, Asn170, and Asn191.

In Saimiriine herpesvirus 2 (strain 11) (SaHV-2), this protein is Gene 51 glycoprotein (51).